The chain runs to 559 residues: O-fucosyltransferase 37 (559 aa).

The chain crosses the membrane as a helical; Signal-anchor for type II membrane protein span at residues Phe-53 to Ser-73. Asn-126 carries an N-linked (GlcNAc...) asparagine glycan. Residue His-331–Arg-333 coordinates substrate. N-linked (GlcNAc...) asparagine glycans are attached at residues Asn-372, Asn-403, Asn-447, and Asn-504.

It belongs to the glycosyltransferase GT106 family.

It localises to the membrane. It participates in glycan metabolism. In Arabidopsis thaliana (Mouse-ear cress), this protein is O-fucosyltransferase 37.